The chain runs to 436 residues: UPF0597 protein YhaM (436 aa).

Belongs to the UPF0597 family.

In terms of biological role, thought to be a D-serine dehydratase, however it does not complement a dsdA (D-serine dehydratase) mutant in strain CFT073, suggesting it may not have that function. The polypeptide is UPF0597 protein YhaM (Escherichia coli O157:H7).